Reading from the N-terminus, the 89-residue chain is Large ribosomal subunit protein L37-2 (89 aa).

Zn(2+) is bound by residues Cys-19, Cys-22, Cys-34, and Cys-37. Residues 19 to 37 (CRRCGNSSYHLQKSKCSQC) form a C4-type zinc finger.

Belongs to the eukaryotic ribosomal protein eL37 family. Requires Zn(2+) as cofactor.

Binds to the 23S rRNA. This Drosophila melanogaster (Fruit fly) protein is Large ribosomal subunit protein L37-2.